A 156-amino-acid polypeptide reads, in one-letter code: Small ribosomal subunit protein uS7 (156 aa).

The protein belongs to the universal ribosomal protein uS7 family. As to quaternary structure, part of the 30S ribosomal subunit. Contacts proteins S9 and S11.

One of the primary rRNA binding proteins, it binds directly to 16S rRNA where it nucleates assembly of the head domain of the 30S subunit. Is located at the subunit interface close to the decoding center, probably blocks exit of the E-site tRNA. The sequence is that of Small ribosomal subunit protein uS7 from Psychromonas ingrahamii (strain DSM 17664 / CCUG 51855 / 37).